The following is a 387-amino-acid chain: Exodeoxyribonuclease 7 large subunit (387 aa).

It belongs to the XseA family. In terms of assembly, heterooligomer composed of large and small subunits.

It is found in the cytoplasm. It catalyses the reaction Exonucleolytic cleavage in either 5'- to 3'- or 3'- to 5'-direction to yield nucleoside 5'-phosphates.. Bidirectionally degrades single-stranded DNA into large acid-insoluble oligonucleotides, which are then degraded further into small acid-soluble oligonucleotides. This Campylobacter jejuni subsp. jejuni serotype O:23/36 (strain 81-176) protein is Exodeoxyribonuclease 7 large subunit.